The chain runs to 384 residues: 4-hydroxy-3-methylbut-2-en-1-yl diphosphate synthase (flavodoxin) (384 aa).

Residues cysteine 280, cysteine 283, cysteine 315, and glutamate 322 each coordinate [4Fe-4S] cluster.

This sequence belongs to the IspG family. It depends on [4Fe-4S] cluster as a cofactor.

It carries out the reaction (2E)-4-hydroxy-3-methylbut-2-enyl diphosphate + oxidized [flavodoxin] + H2O + 2 H(+) = 2-C-methyl-D-erythritol 2,4-cyclic diphosphate + reduced [flavodoxin]. It participates in isoprenoid biosynthesis; isopentenyl diphosphate biosynthesis via DXP pathway; isopentenyl diphosphate from 1-deoxy-D-xylulose 5-phosphate: step 5/6. Functionally, converts 2C-methyl-D-erythritol 2,4-cyclodiphosphate (ME-2,4cPP) into 1-hydroxy-2-methyl-2-(E)-butenyl 4-diphosphate. This Frankia casuarinae (strain DSM 45818 / CECT 9043 / HFP020203 / CcI3) protein is 4-hydroxy-3-methylbut-2-en-1-yl diphosphate synthase (flavodoxin).